The sequence spans 275 residues: Acetyl-coenzyme A carboxylase carboxyl transferase subunit beta (275 aa).

The CoA carboxyltransferase N-terminal domain occupies 21–275 (GLWIKCQCGA…IKIIGMHQAG (255 aa)). 4 residues coordinate Zn(2+): Cys-26, Cys-28, Cys-44, and Cys-47. The segment at 26-47 (CQCGAILFAKDLERNLKVCQKC) adopts a C4-type zinc-finger fold.

This sequence belongs to the AccD/PCCB family. In terms of assembly, acetyl-CoA carboxylase is a heterohexamer composed of biotin carboxyl carrier protein (AccB), biotin carboxylase (AccC) and two subunits each of ACCase subunit alpha (AccA) and ACCase subunit beta (AccD). Zn(2+) is required as a cofactor.

It is found in the cytoplasm. The enzyme catalyses N(6)-carboxybiotinyl-L-lysyl-[protein] + acetyl-CoA = N(6)-biotinyl-L-lysyl-[protein] + malonyl-CoA. Its pathway is lipid metabolism; malonyl-CoA biosynthesis; malonyl-CoA from acetyl-CoA: step 1/1. In terms of biological role, component of the acetyl coenzyme A carboxylase (ACC) complex. Biotin carboxylase (BC) catalyzes the carboxylation of biotin on its carrier protein (BCCP) and then the CO(2) group is transferred by the transcarboxylase to acetyl-CoA to form malonyl-CoA. This chain is Acetyl-coenzyme A carboxylase carboxyl transferase subunit beta, found in Desulforudis audaxviator (strain MP104C).